Reading from the N-terminus, the 192-residue chain is NF-kappa-B inhibitor-interacting Ras-like protein 1 (192 aa).

Residue 11–18 (GLLSVGKT) participates in GTP binding. An Effector region motif is present at residues 35 to 43 (DCETMEDVY). Residues 58 to 93 (HLYDTRGLQEGVELPKHYFSFADGFVLVYSVNNLES) form an interactions with NFKBIA and NFKBIB region. Residues 61–65 (DTRGL) and 120–123 (NKID) each bind GTP. Residues 168 to 192 (LSQPQSKSSFPLPGRKNKGNSNSEN) are disordered.

The protein belongs to the small GTPase superfamily. Ras family. KappaB-Ras subfamily. Interacts with both NF-kappa-B inhibitor alpha (NFKBIA) and beta (NFKBIB) in vitro. However, it probably only interacts with NFKBIB in vivo. Forms a complex with NFKBIB and NF-kappa-B heterodimer (p50/NFKB1 and p65/RELA). Also interacts with c-Rel (REL). In terms of tissue distribution, widely expressed.

It is found in the cytoplasm. Functionally, atypical Ras-like protein that acts as a potent regulator of NF-kappa-B activity by preventing the degradation of NF-kappa-B inhibitor beta (NFKBIB) by most signals, explaining why NFKBIB is more resistant to degradation. May act by blocking phosphorylation of NFKBIB and mediating cytoplasmic retention of p65/RELA NF-kappa-B subunit. It is unclear whether it acts as a GTPase. Both GTP- and GDP-bound forms block phosphorylation of NFKBIB. The sequence is that of NF-kappa-B inhibitor-interacting Ras-like protein 1 (NKIRAS1) from Homo sapiens (Human).